We begin with the raw amino-acid sequence, 535 residues long: Growth-regulating factor 2 (535 aa).

The QLQ domain maps to P164–K199. A WRC domain is found at D227 to V271. Short sequence motifs (bipartite nuclear localization signal) lie at residues R232–R242 and R260–K267. 3 disordered regions span residues R260 to N308, P417 to T437, and S514 to T535. The segment covering Q272 to Q291 has biased composition (polar residues). The segment covering N299 to N308 has biased composition (low complexity). A compositionally biased stretch (polar residues) spans T426–T437.

It belongs to the GRF family. As to quaternary structure, interacts with GIF1. As to expression, strongly expressed in actively growing and developing tissues, such as roots, upper stems, and shoot tips containing the shoot apical meristem (SAM) and flower buds. Detected in young leaf primordium. Also expressed in mature flowers, but weakly expressed in mature stems and leaves.

The protein localises to the nucleus. Its function is as follows. Transcription activator that plays a role in the regulation of cell expansion in leaf and cotyledons tissues. Component of a network formed by miR396, the GRFs and their interacting factors (GIFs) acting in the regulation of meristem function, at least partially through the control of cell proliferation. This Arabidopsis thaliana (Mouse-ear cress) protein is Growth-regulating factor 2 (GRF2).